The chain runs to 353 residues: GTPase Obg (353 aa).

The region spanning 1-159 is the Obg domain; the sequence is MKFIDEATIK…FELYLELKVL (159 aa). The OBG-type G domain occupies 160-332; sequence ADVGLLGMPN…LTYAIMEHVE (173 aa). GTP-binding positions include 166-173, 191-195, 213-216, 284-287, and 313-315; these read GMPNAGKS, FTTLH, DVPG, NKVD, and SAL. The Mg(2+) site is built by Ser173 and Thr193.

It belongs to the TRAFAC class OBG-HflX-like GTPase superfamily. OBG GTPase family. As to quaternary structure, monomer. Mg(2+) serves as cofactor.

Its subcellular location is the cytoplasm. An essential GTPase which binds GTP, GDP and possibly (p)ppGpp with moderate affinity, with high nucleotide exchange rates and a fairly low GTP hydrolysis rate. Plays a role in control of the cell cycle, stress response, ribosome biogenesis and in those bacteria that undergo differentiation, in morphogenesis control. The protein is GTPase Obg of Methylobacillus flagellatus (strain ATCC 51484 / DSM 6875 / VKM B-1610 / KT).